The primary structure comprises 177 residues: ATP synthase subunit delta (177 aa).

Belongs to the ATPase delta chain family. F-type ATPases have 2 components, F(1) - the catalytic core - and F(0) - the membrane proton channel. F(1) has five subunits: alpha(3), beta(3), gamma(1), delta(1), epsilon(1). F(0) has three main subunits: a(1), b(2) and c(10-14). The alpha and beta chains form an alternating ring which encloses part of the gamma chain. F(1) is attached to F(0) by a central stalk formed by the gamma and epsilon chains, while a peripheral stalk is formed by the delta and b chains.

It localises to the cell inner membrane. Functionally, f(1)F(0) ATP synthase produces ATP from ADP in the presence of a proton or sodium gradient. F-type ATPases consist of two structural domains, F(1) containing the extramembraneous catalytic core and F(0) containing the membrane proton channel, linked together by a central stalk and a peripheral stalk. During catalysis, ATP synthesis in the catalytic domain of F(1) is coupled via a rotary mechanism of the central stalk subunits to proton translocation. In terms of biological role, this protein is part of the stalk that links CF(0) to CF(1). It either transmits conformational changes from CF(0) to CF(1) or is implicated in proton conduction. The polypeptide is ATP synthase subunit delta (Vibrio parahaemolyticus serotype O3:K6 (strain RIMD 2210633)).